Here is an 82-residue protein sequence, read N- to C-terminus: MPNIKSAKKDLRRSRAAAVRNRAQRSALRTAVKKARVATAAAADHLTAVSLLDRAARKGLIHRNAAARVKSRLAKQAAASAA.

The tract at residues 1 to 29 (MPNIKSAKKDLRRSRAAAVRNRAQRSALR) is disordered. Positions 16–29 (AAAVRNRAQRSALR) are enriched in low complexity.

It belongs to the bacterial ribosomal protein bS20 family.

Its function is as follows. Binds directly to 16S ribosomal RNA. The chain is Small ribosomal subunit protein bS20 from Gemmatimonas aurantiaca (strain DSM 14586 / JCM 11422 / NBRC 100505 / T-27).